An 839-amino-acid polypeptide reads, in one-letter code: Probable beta-glucosidase I (839 aa).

A glycan (N-linked (GlcNAc...) asparagine) is linked at Asn-197. Residue Asp-225 is part of the active site. The 161-residue stretch at 396–556 (DGKTGFKFRV…TQEELISKAV (161 aa)) folds into the PA14 domain. Asn-494 carries an N-linked (GlcNAc...) asparagine glycan.

It belongs to the glycosyl hydrolase 3 family.

It is found in the secreted. The enzyme catalyses Hydrolysis of terminal, non-reducing beta-D-glucosyl residues with release of beta-D-glucose.. It functions in the pathway glycan metabolism; cellulose degradation. Its function is as follows. Beta-glucosidases are one of a number of cellulolytic enzymes, and catalyze the last step releasing glucose from the inhibitory cellobiose. In Emericella nidulans (strain FGSC A4 / ATCC 38163 / CBS 112.46 / NRRL 194 / M139) (Aspergillus nidulans), this protein is Probable beta-glucosidase I (bglI).